Consider the following 370-residue polypeptide: 3-isopropylmalate dehydrogenase (370 aa).

Position 77-90 (77-90 (GAKWDGVPYEARPE)) interacts with NAD(+). Residues R97, R107, R135, and D226 each contribute to the substrate site. D226, D250, and D254 together coordinate Mg(2+). 290–302 (GSAPDIAGKGLAN) provides a ligand contact to NAD(+).

This sequence belongs to the isocitrate and isopropylmalate dehydrogenases family. LeuB type 1 subfamily. In terms of assembly, homodimer. Requires Mg(2+) as cofactor. Mn(2+) serves as cofactor.

It localises to the cytoplasm. The enzyme catalyses (2R,3S)-3-isopropylmalate + NAD(+) = 4-methyl-2-oxopentanoate + CO2 + NADH. Its pathway is amino-acid biosynthesis; L-leucine biosynthesis; L-leucine from 3-methyl-2-oxobutanoate: step 3/4. Catalyzes the oxidation of 3-carboxy-2-hydroxy-4-methylpentanoate (3-isopropylmalate) to 3-carboxy-4-methyl-2-oxopentanoate. The product decarboxylates to 4-methyl-2 oxopentanoate. The protein is 3-isopropylmalate dehydrogenase of Rhodopseudomonas palustris (strain BisB18).